An 887-amino-acid polypeptide reads, in one-letter code: MKKLTSAQVRRMFLEFFQEKGHAVEPSASLIPVDDPSLLWINSGVATLKKYFDGRIVPENPRICIVPENPRICNAQKSIRTNDIENVGKTARHHTFFEMLGNFSIGDYFKREAIHWAWEFLTSDKWIGFDPERLSVTVHPEDEEAYNIWRNEIGLPEERIIRLEGNFWDIGEGPSGPNTEIFYDRGEAFGNDPNDPELYPGGENDRYLEVWNLVFSQFNHNPDGTYTPLPKKNIDTGMGLERMCSILQDVPTNFETDLFLPIIRATEQIAGERYGEDPDKDVAFKVIADHIRAVTFAIGDGALPSNEGRGYVLRRLLRRAVRYAKHIGIDRPFMYELVPVVGEIMHDYYPEVKEKADFIARVIRTEEERFHETLHEGLAILAEVIEKAKEQGSDVIPGEEAFRLYDTYGFPIELTEEYAAEAGMTVDHAGFEREMERQRERARAARQDVDSMQVQGGVLGDIKDESRFVGYDELVAASTVIAIVKDGRLVEEVKAGEEAQIIVDVTPFYAESGGQIADQGVFESETGTAVVKDVQKAPNGQHLHAIIVERGTVKKGSRYTARVDEAKRMRIVKNHTATHLLHQALKDVLGRHVNQAGSLVAPDRLRFDFTHFGQVKPEELERIEAIVNEQIWKSLPVDIFYKPLEEAKAMGAMALFGEKYGDIVRVVKVGDYSLELCGGCHVPNTSAIGLFKIVSESGIGAGTRRIEAVTGEAAYRFMSEQLAILQEAAQKLKTSPKELNARLDGLFAELKELERENESLAARLAHMEAEHLTRQVKDVNGVPVLAAKVQANDMNQLRAMADDLKQKLGTAVIVLASAQGGKVQLIAAVTDDLVKKGFHAGKLVKEVASRCGGGGGGRPDLAQAGGKDPSKVGEALGYVETWVKSVS.

Residues His-575, His-579, Cys-677, and His-681 each coordinate Zn(2+).

This sequence belongs to the class-II aminoacyl-tRNA synthetase family. Requires Zn(2+) as cofactor.

It localises to the cytoplasm. The catalysed reaction is tRNA(Ala) + L-alanine + ATP = L-alanyl-tRNA(Ala) + AMP + diphosphate. Functionally, catalyzes the attachment of alanine to tRNA(Ala) in a two-step reaction: alanine is first activated by ATP to form Ala-AMP and then transferred to the acceptor end of tRNA(Ala). Also edits incorrectly charged Ser-tRNA(Ala) and Gly-tRNA(Ala) via its editing domain. The sequence is that of Alanine--tRNA ligase from Geobacillus kaustophilus (strain HTA426).